Consider the following 544-residue polypeptide: Chaperonin GroEL (544 aa).

ATP contacts are provided by residues T30–P33, K51, D87–T91, G415, D481–L483, and D497.

Belongs to the chaperonin (HSP60) family. As to quaternary structure, forms a cylinder of 14 subunits composed of two heptameric rings stacked back-to-back. Interacts with the co-chaperonin GroES.

It localises to the cytoplasm. The enzyme catalyses ATP + H2O + a folded polypeptide = ADP + phosphate + an unfolded polypeptide.. In terms of biological role, together with its co-chaperonin GroES, plays an essential role in assisting protein folding. The GroEL-GroES system forms a nano-cage that allows encapsulation of the non-native substrate proteins and provides a physical environment optimized to promote and accelerate protein folding. The sequence is that of Chaperonin GroEL from Chlamydia trachomatis serovar L2 (strain ATCC VR-902B / DSM 19102 / 434/Bu).